We begin with the raw amino-acid sequence, 704 residues long: Elongation factor G 2 (704 aa).

A tr-type G domain is found at 8 to 290 (ERYRNIGISA…AIIDYLPSPV (283 aa)). Residues 17–24 (AHIDAGKT), 88–92 (DTPGH), and 142–145 (NKMD) each bind GTP.

The protein belongs to the TRAFAC class translation factor GTPase superfamily. Classic translation factor GTPase family. EF-G/EF-2 subfamily.

The protein localises to the cytoplasm. Functionally, catalyzes the GTP-dependent ribosomal translocation step during translation elongation. During this step, the ribosome changes from the pre-translocational (PRE) to the post-translocational (POST) state as the newly formed A-site-bound peptidyl-tRNA and P-site-bound deacylated tRNA move to the P and E sites, respectively. Catalyzes the coordinated movement of the two tRNA molecules, the mRNA and conformational changes in the ribosome. The polypeptide is Elongation factor G 2 (Polaromonas sp. (strain JS666 / ATCC BAA-500)).